Consider the following 192-residue polypeptide: Ion-translocating oxidoreductase complex subunit A (192 aa).

6 helical membrane-spanning segments follow: residues 5 to 25 (ILLIIGTALINNFVLVKFLGL), 39 to 59 (VGMGLATMFVLTVASLCAYLV), 63 to 83 (ILIPLNATFLRTLVFILVIAV), 102 to 122 (LLGIFLPLITTNCAVLGVALL), 134 to 154 (VVYGFGASLGFSLVLVLFAAL), and 171 to 191 (AIALITAGLMSLAFMGFTGLV).

It belongs to the NqrDE/RnfAE family. As to quaternary structure, the complex is composed of six subunits: RnfA, RnfB, RnfC, RnfD, RnfE and RnfG.

Its subcellular location is the cell inner membrane. Functionally, part of a membrane-bound complex that couples electron transfer with translocation of ions across the membrane. The chain is Ion-translocating oxidoreductase complex subunit A from Haemophilus influenzae (strain 86-028NP).